The primary structure comprises 364 residues: Dihydroorotate dehydrogenase (quinone) (364 aa).

Residues 61–65 and Thr85 contribute to the FMN site; that span reads AGYDK. Lys65 serves as a coordination point for substrate. 110 to 114 contributes to the substrate binding site; it reads NRLGF. Positions 139 and 170 each coordinate FMN. Residue Asn170 participates in substrate binding. Ser173 functions as the Nucleophile in the catalytic mechanism. Residue Asn175 coordinates substrate. FMN is bound by residues Lys215 and Ser243. 244–245 contacts substrate; the sequence is NT. Residues Gly266, Gly295, and 316 to 317 contribute to the FMN site; that span reads YT.

It belongs to the dihydroorotate dehydrogenase family. Type 2 subfamily. In terms of assembly, monomer. FMN serves as cofactor.

The protein resides in the cell membrane. The catalysed reaction is (S)-dihydroorotate + a quinone = orotate + a quinol. It functions in the pathway pyrimidine metabolism; UMP biosynthesis via de novo pathway; orotate from (S)-dihydroorotate (quinone route): step 1/1. Its function is as follows. Catalyzes the conversion of dihydroorotate to orotate with quinone as electron acceptor. The protein is Dihydroorotate dehydrogenase (quinone) of Brucella abortus (strain S19).